The chain runs to 82 residues: MKLTCVVIVAVLFLTAWTLVMADDSNNGLANLFSKSRDEMEDPEAAKLEKNYCQEKWDYCPVPFLGSRYCCDGLFCTLFFCA.

The N-terminal stretch at 1–22 (MKLTCVVIVAVLFLTAWTLVMA) is a signal peptide. A propeptide spanning residues 23–50 (DDSNNGLANLFSKSRDEMEDPEAAKLEK) is cleaved from the precursor. Intrachain disulfides connect cysteine 53–cysteine 71, cysteine 60–cysteine 76, and cysteine 70–cysteine 81.

It belongs to the conotoxin O1 superfamily. As to expression, expressed by the venom duct.

It is found in the secreted. Omega-conotoxins act at presynaptic membranes, they bind and block voltage-gated calcium channels (Cav). This chain is Omega-conotoxin-like TxO6, found in Conus textile (Cloth-of-gold cone).